Reading from the N-terminus, the 371-residue chain is Chaperone protein DnaJ (371 aa).

Residues D4–G68 enclose the J domain. The segment at G134 to Q212 adopts a CR-type zinc-finger fold. The Zn(2+) site is built by C147, C150, C164, C167, C186, C189, C200, and C203. CXXCXGXG motif repeat units lie at residues C147–G154, C164–G171, C186–G193, and C200–G207.

Belongs to the DnaJ family. As to quaternary structure, homodimer. It depends on Zn(2+) as a cofactor.

The protein localises to the cytoplasm. In terms of biological role, participates actively in the response to hyperosmotic and heat shock by preventing the aggregation of stress-denatured proteins and by disaggregating proteins, also in an autonomous, DnaK-independent fashion. Unfolded proteins bind initially to DnaJ; upon interaction with the DnaJ-bound protein, DnaK hydrolyzes its bound ATP, resulting in the formation of a stable complex. GrpE releases ADP from DnaK; ATP binding to DnaK triggers the release of the substrate protein, thus completing the reaction cycle. Several rounds of ATP-dependent interactions between DnaJ, DnaK and GrpE are required for fully efficient folding. Also involved, together with DnaK and GrpE, in the DNA replication of plasmids through activation of initiation proteins. The polypeptide is Chaperone protein DnaJ (Rickettsia felis (strain ATCC VR-1525 / URRWXCal2) (Rickettsia azadi)).